A 595-amino-acid polypeptide reads, in one-letter code: Actin-histidine N-methyltransferase (595 aa).

Residues 1 to 22 form a disordered region; the sequence is MGKKSRVKTQKSGTGATATVSP. Over residues 10–20 the composition is skewed to polar residues; it reads QKSGTGATATV. S-adenosyl-L-methionine contacts are provided by residues arginine 75, 104–106, arginine 254, 275–279, and 325–327; these read EGF, DMCNH, and SGF. The SET domain occupies 94 to 314; it reads EGFEMVNFKE…AGEQIYIFYG (221 aa). Residue serine 513 is modified to Phosphoserine. Polar residues predominate over residues 549–573; that stretch reads ENGLVNGENSIPNGTRSENENLNQE. Residues 549–595 are disordered; it reads ENGLVNGENSIPNGTRSENENLNQEGSKRAVEDAKGSSSDSTDEVKE. Basic and acidic residues predominate over residues 574–583; it reads GSKRAVEDAK.

Belongs to the class V-like SAM-binding methyltransferase superfamily. SETD3 actin-histidine methyltransferase family. In terms of assembly, interacts with MYOD1. Phosphorylated by GSK3B, which is required for recognition by the SCF(FBXW7) complex and subsequent degradation. Post-translationally, ubiquitinated by the SCF(FBXW7) complex following phosphorylation by GSK3B, leading to its degradation by the proteasome.

The protein localises to the cytoplasm. It localises to the nucleus. It catalyses the reaction L-histidyl-[protein] + S-adenosyl-L-methionine = N(tele)-methyl-L-histidyl-[protein] + S-adenosyl-L-homocysteine + H(+). Functionally, protein-histidine N-methyltransferase that specifically mediates 3-methylhistidine (tele-methylhistidine) methylation of actin at 'His-73'. Histidine methylation of actin is required for smooth muscle contraction of the laboring uterus during delivery. Does not have protein-lysine N-methyltransferase activity and probably only catalyzes histidine methylation of actin. This chain is Actin-histidine N-methyltransferase, found in Plecturocebus moloch (Dusky titi monkey).